A 280-amino-acid polypeptide reads, in one-letter code: uncharacterized protein (280 aa).

The next 7 membrane-spanning stretches (helical) occupy residues 6 to 26 (YLVI…TPLV), 38 to 58 (VLAI…YLFP), 79 to 99 (IFLL…VFLK), 105 to 125 (GVLA…ELIF), 144 to 164 (NQIY…IILW), 171 to 191 (ISFF…ALMV), and 231 to 251 (LVFI…TLFA).

It is found in the cell membrane. This is an uncharacterized protein from Mycoplasma genitalium (strain ATCC 33530 / DSM 19775 / NCTC 10195 / G37) (Mycoplasmoides genitalium).